Here is a 26-residue protein sequence, read N- to C-terminus: Thioredoxin H-type (26 aa).

It belongs to the thioredoxin family. Plant H-type subfamily.

It is found in the cytoplasm. Participates in various redox reactions through the reversible oxidation of the active center dithiol to a disulfide. The H form is known to activate a number of cytosolic enzymes. The chain is Thioredoxin H-type from Populus euphratica (Euphrates poplar).